Here is a 252-residue protein sequence, read N- to C-terminus: MKLKIDLNCDLGEAFGNYTFGGDQHILPLITSANIACGYHAGDEDVMNETVQLAKKNNISIGAHPGLPDLKGFGRRKMDLTPNEIYNLVIYQLGALSGFCKINHVKMMHVKPHGALYQMGARNKEIAHAIAQAVFDFDSNLIFVGLANTLLISEAELVGLKVASEVFADRRYEDDGQLVSRKKTDATITNTDEAIQQALKMVLENKVVSKNGKIIDLKADTICVHGDGKHALEFVTQIRNELMKEGIDIQSL.

Belongs to the LamB/PxpA family. In terms of assembly, forms a complex composed of PxpA, PxpB and PxpC.

It carries out the reaction 5-oxo-L-proline + ATP + 2 H2O = L-glutamate + ADP + phosphate + H(+). Functionally, catalyzes the cleavage of 5-oxoproline to form L-glutamate coupled to the hydrolysis of ATP to ADP and inorganic phosphate. This Staphylococcus epidermidis (strain ATCC 35984 / DSM 28319 / BCRC 17069 / CCUG 31568 / BM 3577 / RP62A) protein is 5-oxoprolinase subunit A.